A 57-amino-acid polypeptide reads, in one-letter code: UPF0057 membrane protein T23F2.5 (57 aa).

A run of 2 helical transmembrane segments spans residues 3-23 (LTCT…IGVW) and 36-56 (ILLT…VILA).

It belongs to the UPF0057 (PMP3) family.

It is found in the membrane. The polypeptide is UPF0057 membrane protein T23F2.5 (Caenorhabditis elegans).